Reading from the N-terminus, the 460-residue chain is Glycine--tRNA ligase (460 aa).

Residues R98 and E172 each contribute to the substrate site. ATP contacts are provided by residues 204–206 (RNE), 214–219 (FRTREF), 288–289 (EL), and 332–335 (GADR). 219–223 (FEQME) is a binding site for substrate. Residue 328 to 332 (EPSLG) coordinates substrate.

It belongs to the class-II aminoacyl-tRNA synthetase family. In terms of assembly, homodimer.

The protein resides in the cytoplasm. It carries out the reaction tRNA(Gly) + glycine + ATP = glycyl-tRNA(Gly) + AMP + diphosphate. Its function is as follows. Catalyzes the attachment of glycine to tRNA(Gly). The polypeptide is Glycine--tRNA ligase (Geobacillus kaustophilus (strain HTA426)).